A 593-amino-acid polypeptide reads, in one-letter code: Aspartate--tRNA(Asp/Asn) ligase (593 aa).

Glutamate 176 is a binding site for L-aspartate. An aspartate region spans residues 200-203 (QIFK). Position 222 (arginine 222) interacts with L-aspartate. ATP-binding positions include 222 to 224 (RDE) and glutamine 231. Histidine 450 lines the L-aspartate pocket. Glutamate 490 is an ATP binding site. Arginine 497 serves as a coordination point for L-aspartate. 542–545 (GLDR) is a binding site for ATP.

This sequence belongs to the class-II aminoacyl-tRNA synthetase family. Type 1 subfamily. Homodimer.

The protein resides in the cytoplasm. It carries out the reaction tRNA(Asx) + L-aspartate + ATP = L-aspartyl-tRNA(Asx) + AMP + diphosphate. Its function is as follows. Aspartyl-tRNA synthetase with relaxed tRNA specificity since it is able to aspartylate not only its cognate tRNA(Asp) but also tRNA(Asn). Reaction proceeds in two steps: L-aspartate is first activated by ATP to form Asp-AMP and then transferred to the acceptor end of tRNA(Asp/Asn). This Symbiobacterium thermophilum (strain DSM 24528 / JCM 14929 / IAM 14863 / T) protein is Aspartate--tRNA(Asp/Asn) ligase.